Consider the following 253-residue polypeptide: Tryptophan synthase alpha chain (253 aa).

Catalysis depends on proton acceptor residues E46 and D57.

Belongs to the TrpA family. Tetramer of two alpha and two beta chains.

It catalyses the reaction (1S,2R)-1-C-(indol-3-yl)glycerol 3-phosphate + L-serine = D-glyceraldehyde 3-phosphate + L-tryptophan + H2O. It functions in the pathway amino-acid biosynthesis; L-tryptophan biosynthesis; L-tryptophan from chorismate: step 5/5. In terms of biological role, the alpha subunit is responsible for the aldol cleavage of indoleglycerol phosphate to indole and glyceraldehyde 3-phosphate. The protein is Tryptophan synthase alpha chain of Dictyoglomus thermophilum (strain ATCC 35947 / DSM 3960 / H-6-12).